We begin with the raw amino-acid sequence, 317 residues long: Methionyl-tRNA formyltransferase (317 aa).

112-115 is a binding site for (6S)-5,6,7,8-tetrahydrofolate; it reads SLLP.

The protein belongs to the Fmt family.

It catalyses the reaction L-methionyl-tRNA(fMet) + (6R)-10-formyltetrahydrofolate = N-formyl-L-methionyl-tRNA(fMet) + (6S)-5,6,7,8-tetrahydrofolate + H(+). Functionally, attaches a formyl group to the free amino group of methionyl-tRNA(fMet). The formyl group appears to play a dual role in the initiator identity of N-formylmethionyl-tRNA by promoting its recognition by IF2 and preventing the misappropriation of this tRNA by the elongation apparatus. The protein is Methionyl-tRNA formyltransferase of Mesorhizobium japonicum (strain LMG 29417 / CECT 9101 / MAFF 303099) (Mesorhizobium loti (strain MAFF 303099)).